A 444-amino-acid chain; its full sequence is tRNA modification GTPase MnmE (444 aa).

3 residues coordinate (6S)-5-formyl-5,6,7,8-tetrahydrofolate: arginine 28, glutamate 86, and arginine 126. A TrmE-type G domain is found at 224–368; it reads GFCVVLAGAP…LLDAIQGSAA (145 aa). Asparagine 234 provides a ligand contact to K(+). Residues 234 to 239, 253 to 259, and 278 to 281 each bind GTP; these read NAGKST, SDIPGTT, and DTAG. Serine 238 contributes to the Mg(2+) binding site. Positions 253, 255, and 258 each coordinate K(+). Threonine 259 is a binding site for Mg(2+). Lysine 444 provides a ligand contact to (6S)-5-formyl-5,6,7,8-tetrahydrofolate.

This sequence belongs to the TRAFAC class TrmE-Era-EngA-EngB-Septin-like GTPase superfamily. TrmE GTPase family. In terms of assembly, homodimer. Heterotetramer of two MnmE and two MnmG subunits. K(+) serves as cofactor.

The protein resides in the cytoplasm. In terms of biological role, exhibits a very high intrinsic GTPase hydrolysis rate. Involved in the addition of a carboxymethylaminomethyl (cmnm) group at the wobble position (U34) of certain tRNAs, forming tRNA-cmnm(5)s(2)U34. The sequence is that of tRNA modification GTPase MnmE from Methylorubrum populi (strain ATCC BAA-705 / NCIMB 13946 / BJ001) (Methylobacterium populi).